A 150-amino-acid chain; its full sequence is MAKRVSLPDVVISAPKAVFKPAKEEALACILPKYYKSMADVSIKTNSVIDKCWFCNQDLVFKPISIETFKGGEVGYFCSKICRDSLASMVKSHVALREEPKISLLPLVFYEDKEKVINTINLLRDKDGVYGSCYFKENSQIIDISLRSLL.

It belongs to the orthopoxvirus VLTF-2/OPG126 family. As to quaternary structure, interacts with itself. Interacts with the late transcription factors VLTF-1/OPG093.

Functionally, acts with RNA polymerase to initiate transcription from late gene promoters. In Vaccinia virus (strain Western Reserve) (VACV), this protein is Viral late gene transcription factor 2 (OPG126).